A 260-amino-acid chain; its full sequence is Acetylglutamate kinase (260 aa).

Residues 46-47 (GG), Arg-68, and Asn-160 each bind substrate.

The protein belongs to the acetylglutamate kinase family. ArgB subfamily.

The protein resides in the cytoplasm. The catalysed reaction is N-acetyl-L-glutamate + ATP = N-acetyl-L-glutamyl 5-phosphate + ADP. The protein operates within amino-acid biosynthesis; L-arginine biosynthesis; N(2)-acetyl-L-ornithine from L-glutamate: step 2/4. Its function is as follows. Catalyzes the ATP-dependent phosphorylation of N-acetyl-L-glutamate. The polypeptide is Acetylglutamate kinase (Shewanella baltica (strain OS223)).